The following is a 930-amino-acid chain: Isoleucine--tRNA ligase (930 aa).

Residues 57–67 carry the 'HIGH' region motif; that stretch reads PYANGNIHVGH. Glu554 serves as a coordination point for L-isoleucyl-5'-AMP. The 'KMSKS' region motif lies at 595-599; that stretch reads KMSKS. Residue Lys598 coordinates ATP.

It belongs to the class-I aminoacyl-tRNA synthetase family. IleS type 1 subfamily. As to quaternary structure, monomer.

Its subcellular location is the cytoplasm. It catalyses the reaction tRNA(Ile) + L-isoleucine + ATP = L-isoleucyl-tRNA(Ile) + AMP + diphosphate. Functionally, catalyzes the attachment of isoleucine to tRNA(Ile). As IleRS can inadvertently accommodate and process structurally similar amino acids such as valine, to avoid such errors it has two additional distinct tRNA(Ile)-dependent editing activities. One activity is designated as 'pretransfer' editing and involves the hydrolysis of activated Val-AMP. The other activity is designated 'posttransfer' editing and involves deacylation of mischarged Val-tRNA(Ile). The sequence is that of Isoleucine--tRNA ligase from Streptococcus agalactiae serotype Ia (strain ATCC 27591 / A909 / CDC SS700).